Consider the following 312-residue polypeptide: Cytochrome f (312 aa).

A signal peptide spans 1–30 (MYLSKNFFLNLKTFIFSFFVLCFFSQSAQA). Residues tyrosine 31, cysteine 51, cysteine 54, and histidine 55 each coordinate heme. Residues 278–298 (VQGLLLFSLFILLAQIFLVLK) traverse the membrane as a helical segment.

Belongs to the cytochrome f family. In terms of assembly, the 4 large subunits of the cytochrome b6-f complex are cytochrome b6, subunit IV (17 kDa polypeptide, petD), cytochrome f and the Rieske protein, while the 4 small subunits are PetG, PetL, PetM and PetN. The complex functions as a dimer. Heme is required as a cofactor.

It is found in the plastid. The protein localises to the chloroplast thylakoid membrane. Its function is as follows. Component of the cytochrome b6-f complex, which mediates electron transfer between photosystem II (PSII) and photosystem I (PSI), cyclic electron flow around PSI, and state transitions. This chain is Cytochrome f (petA), found in Bigelowiella natans (Pedinomonas minutissima).